The sequence spans 393 residues: MSLPLTKKDLMIVNMGPQHPSMHGVLRLIVTLDGEDVIDCEPILGYLHRGMEKIAENRTIIQYLPYVTRWDYLATMFTEAITVNAPEFLENIQIPQRASYIRVIMLELSRIASHLLWLGPFMADLGAQTPFFYIFRERELIYDLFEAATGMRMMHNYFRIGGVAADLPYGWIDKCLDFCDYFLRGVVEYQQLITQNPIFLERVEGVGFISGEEAVNWGLSGPMLRASGIQWDLRKVDPYESYNQFDWKVQWQKEGDSLARYLVRVGEMSESIKIIQQAIEKIPGGPYENLEVRRFKKEKNSEWNDFEYKFLGKKPSPNFELSRQELYVRVEAPKGELGIYLVGDDSLFPWRWKIRPPGFINLQILPQLVKKMKLADIMTILGSIDIIMGEVDR.

Belongs to the complex I 49 kDa subunit family. As to quaternary structure, NDH is composed of at least 16 different subunits, 5 of which are encoded in the nucleus.

It is found in the plastid. The protein localises to the chloroplast thylakoid membrane. It catalyses the reaction a plastoquinone + NADH + (n+1) H(+)(in) = a plastoquinol + NAD(+) + n H(+)(out). The enzyme catalyses a plastoquinone + NADPH + (n+1) H(+)(in) = a plastoquinol + NADP(+) + n H(+)(out). NDH shuttles electrons from NAD(P)H:plastoquinone, via FMN and iron-sulfur (Fe-S) centers, to quinones in the photosynthetic chain and possibly in a chloroplast respiratory chain. The immediate electron acceptor for the enzyme in this species is believed to be plastoquinone. Couples the redox reaction to proton translocation, and thus conserves the redox energy in a proton gradient. In Hordeum vulgare (Barley), this protein is NAD(P)H-quinone oxidoreductase subunit H, chloroplastic.